The primary structure comprises 155 residues: Small ribosomal subunit protein uS7c (155 aa).

Belongs to the universal ribosomal protein uS7 family. Part of the 30S ribosomal subunit.

Its subcellular location is the plastid. It is found in the chloroplast. One of the primary rRNA binding proteins, it binds directly to 16S rRNA where it nucleates assembly of the head domain of the 30S subunit. The protein is Small ribosomal subunit protein uS7c (rps7) of Cedrus deodara (Deodar cedar).